The chain runs to 319 residues: Putative ribose-phosphate pyrophosphokinase 2 (319 aa).

Residues 40–42 (DGE) and 99–100 (RQ) each bind ATP. Mg(2+) is bound at residue His133. Residues Asp222 and 226 to 230 (NTGRT) each bind D-ribose 5-phosphate.

It belongs to the ribose-phosphate pyrophosphokinase family. Class I subfamily. Homohexamer. Requires Mg(2+) as cofactor.

The protein resides in the cytoplasm. It carries out the reaction D-ribose 5-phosphate + ATP = 5-phospho-alpha-D-ribose 1-diphosphate + AMP + H(+). It functions in the pathway metabolic intermediate biosynthesis; 5-phospho-alpha-D-ribose 1-diphosphate biosynthesis; 5-phospho-alpha-D-ribose 1-diphosphate from D-ribose 5-phosphate (route I): step 1/1. Involved in the biosynthesis of the central metabolite phospho-alpha-D-ribosyl-1-pyrophosphate (PRPP) via the transfer of pyrophosphoryl group from ATP to 1-hydroxyl of ribose-5-phosphate (Rib-5-P). The sequence is that of Putative ribose-phosphate pyrophosphokinase 2 from Streptococcus pneumoniae serotype 4 (strain ATCC BAA-334 / TIGR4).